The following is a 501-amino-acid chain: NAD(P)H-quinone oxidoreductase chain 4, chloroplastic (501 aa).

The next 14 membrane-spanning stretches (helical) occupy residues 4–24 (FPWLTTIVLLPVFAGCVIPFF), 35–55 (YTLGVCLLEFLLITYVFCYYF), 87–107 (IGLILLTGFITTLATLAAWPV), 113–133 (LFYFLMLAMYSGQVGLFASQD), 134–154 (ILLFFFMWELELIPVYLLLCI), 167–187 (FILYTAGGSIFILMGALTMGF), 211–231 (IILYLGFFIAYAVKLPIFPLH), 242–262 (HYSTCMLLAGILLKMGGYGLI), 274–294 (SIFAPWIVAVGAIQIVYAALI), 310–330 (ISHMGFVLIGIGSMTDVGLNG), 331–351 (AILQMVSHGLIGAALFFLAGI), 386–406 (LALPGMSGFVAEFLVFLGIVV), 416–436 (ILVTIIEAIGIILTPIYLLSM), and 464–484 (IFILVCLIFPIVGIGLYPNSV).

The protein belongs to the complex I subunit 4 family.

It is found in the plastid. Its subcellular location is the chloroplast thylakoid membrane. The catalysed reaction is a plastoquinone + NADH + (n+1) H(+)(in) = a plastoquinol + NAD(+) + n H(+)(out). It carries out the reaction a plastoquinone + NADPH + (n+1) H(+)(in) = a plastoquinol + NADP(+) + n H(+)(out). The polypeptide is NAD(P)H-quinone oxidoreductase chain 4, chloroplastic (Physcomitrium patens (Spreading-leaved earth moss)).